A 342-amino-acid chain; its full sequence is tRNA(Ile)-lysidine synthase (342 aa).

31–36 is an ATP binding site; it reads SGGQDS.

It belongs to the tRNA(Ile)-lysidine synthase family.

The protein localises to the cytoplasm. It catalyses the reaction cytidine(34) in tRNA(Ile2) + L-lysine + ATP = lysidine(34) in tRNA(Ile2) + AMP + diphosphate + H(+). Its function is as follows. Ligates lysine onto the cytidine present at position 34 of the AUA codon-specific tRNA(Ile) that contains the anticodon CAU, in an ATP-dependent manner. Cytidine is converted to lysidine, thus changing the amino acid specificity of the tRNA from methionine to isoleucine. The protein is tRNA(Ile)-lysidine synthase of Nostoc sp. (strain PCC 7120 / SAG 25.82 / UTEX 2576).